Consider the following 358-residue polypeptide: Methylthioribose-1-phosphate isomerase (358 aa).

Substrate is bound by residues 54 to 56 (RGA), Arg96, and Gln205. Asp246 (proton donor) is an active-site residue. 256-257 (NK) serves as a coordination point for substrate.

It belongs to the eIF-2B alpha/beta/delta subunits family. MtnA subfamily.

The catalysed reaction is 5-(methylsulfanyl)-alpha-D-ribose 1-phosphate = 5-(methylsulfanyl)-D-ribulose 1-phosphate. Its pathway is amino-acid biosynthesis; L-methionine biosynthesis via salvage pathway; L-methionine from S-methyl-5-thio-alpha-D-ribose 1-phosphate: step 1/6. Catalyzes the interconversion of methylthioribose-1-phosphate (MTR-1-P) into methylthioribulose-1-phosphate (MTRu-1-P). The polypeptide is Methylthioribose-1-phosphate isomerase (Stutzerimonas stutzeri (strain A1501) (Pseudomonas stutzeri)).